The sequence spans 134 residues: Parvalbumin-like EF-hand-containing protein (134 aa).

EF-hand domains are found at residues 55–90 (QLDD…IPSS) and 96–131 (LTDE…EKIP). Residues aspartate 68, aspartate 70, serine 72, phenylalanine 74, glutamate 76, glutamate 79, aspartate 109, aspartate 113, and glutamate 120 each coordinate Ca(2+).

Belongs to the parvalbumin family.

This chain is Parvalbumin-like EF-hand-containing protein, found in Homo sapiens (Human).